We begin with the raw amino-acid sequence, 264 residues long: Thymidylate synthase (264 aa).

Arg21 lines the dUMP pocket. (6R)-5,10-methylene-5,6,7,8-tetrahydrofolate is bound at residue His51. 126 to 127 provides a ligand contact to dUMP; sequence RR. Residue Cys146 is the Nucleophile of the active site. DUMP-binding positions include 166 to 169, Asn177, and 207 to 209; these read RSAD and HLY. Asp169 is a (6R)-5,10-methylene-5,6,7,8-tetrahydrofolate binding site. Position 263 (Ala263) interacts with (6R)-5,10-methylene-5,6,7,8-tetrahydrofolate.

The protein belongs to the thymidylate synthase family. Bacterial-type ThyA subfamily. In terms of assembly, homodimer.

It is found in the cytoplasm. It carries out the reaction dUMP + (6R)-5,10-methylene-5,6,7,8-tetrahydrofolate = 7,8-dihydrofolate + dTMP. It participates in pyrimidine metabolism; dTTP biosynthesis. In terms of biological role, catalyzes the reductive methylation of 2'-deoxyuridine-5'-monophosphate (dUMP) to 2'-deoxythymidine-5'-monophosphate (dTMP) while utilizing 5,10-methylenetetrahydrofolate (mTHF) as the methyl donor and reductant in the reaction, yielding dihydrofolate (DHF) as a by-product. This enzymatic reaction provides an intracellular de novo source of dTMP, an essential precursor for DNA biosynthesis. This is Thymidylate synthase from Hyphomonas neptunium (strain ATCC 15444).